The chain runs to 224 residues: UPF0758 protein VCM66_0205 (224 aa).

A disordered region spans residues 1–20; sequence MSLKQLPTESMPREKLLQRG. An MPN domain is found at 102–224; that stretch reads ALTSPQQTKL…VVSFAERGWI (123 aa). Histidine 173, histidine 175, and aspartate 186 together coordinate Zn(2+). Residues 173–186 carry the JAMM motif motif; sequence HNHPSGVAEPSQAD.

Belongs to the UPF0758 family.

This is UPF0758 protein VCM66_0205 from Vibrio cholerae serotype O1 (strain M66-2).